A 358-amino-acid chain; its full sequence is Mannonate dehydratase (358 aa).

Belongs to the mannonate dehydratase family. Fe(2+) serves as cofactor. Requires Mn(2+) as cofactor.

The catalysed reaction is D-mannonate = 2-dehydro-3-deoxy-D-gluconate + H2O. It functions in the pathway carbohydrate metabolism; pentose and glucuronate interconversion. Functionally, catalyzes the dehydration of D-mannonate. This chain is Mannonate dehydratase, found in Lactococcus lactis subsp. lactis (strain IL1403) (Streptococcus lactis).